The primary structure comprises 126 residues: Defensin-like protein 183 (126 aa).

Residues 1 to 26 form the signal peptide; it reads MEKALSLVVFIIFSIMLASVENKVNA. Intrachain disulfides connect Cys29–Cys68, Cys36–Cys55, Cys39–Cys62, Cys43–Cys64, Cys80–Cys126, Cys91–Cys111, Cys96–Cys120, and Cys100–Cys122.

Belongs to the DEFL family.

Its subcellular location is the secreted. This is Defensin-like protein 183 (LCR19) from Arabidopsis thaliana (Mouse-ear cress).